The primary structure comprises 95 residues: UPF0235 protein AnaeK_1146 (95 aa).

This sequence belongs to the UPF0235 family.

This chain is UPF0235 protein AnaeK_1146, found in Anaeromyxobacter sp. (strain K).